A 296-amino-acid polypeptide reads, in one-letter code: Prostate androgen-regulated mucin-like protein 1 homolog (296 aa).

The N-terminal stretch at 1-20 (MVCKVLIALCIFTAGLRVQG) is a signal peptide. Over 21–244 (SPTVPLPVSL…EVENALSSGS (224 aa)) the chain is Extracellular. 2 N-linked (GlcNAc...) asparagine glycosylation sites follow: Asn61 and Asn95. A disordered region spans residues 72–220 (LTSQLPTDHR…SPQDTEPGKV (149 aa)). Basic and acidic residues predominate over residues 78–95 (TDHREEAVTSPPLKRDVN). Polar residues predominate over residues 96-110 (STDSSPAGFPSTSSD). Positions 139–167 (LLSSQAPTSATTSPATSLSESLSASVTSS) are enriched in low complexity. Residues 168 to 177 (HNSTVANIQP) are compositionally biased toward polar residues. N-linked (GlcNAc...) asparagine glycosylation is present at Asn169. A compositionally biased stretch (basic and acidic residues) spans 206–217 (VPKEKSPQDTEP). A helical transmembrane segment spans residues 245 to 265 (IAAITVTVIAVVLLVFGGAAY). Topologically, residues 266 to 296 (LKIRHSSYGRLLDDHDYGSWGNYNNPLYDDS) are cytoplasmic. Ser284 is modified (phosphoserine).

This sequence belongs to the PARM family. Post-translationally, highly N-glycosylated and O-glycosylated.

Its subcellular location is the cell membrane. The protein localises to the golgi apparatus membrane. It localises to the endosome membrane. May regulate TLP1 expression and telomerase activity, thus enabling certain prostatic cells to resist apoptosis. This chain is Prostate androgen-regulated mucin-like protein 1 homolog (Parm1), found in Mus musculus (Mouse).